A 123-amino-acid chain; its full sequence is Guanine nucleotide exchange factor MSS4 (123 aa).

An N-acetylmethionine modification is found at M1. The region spanning 9–123 is the MSS4 domain; sequence ELVSAEGRNR…YVALERVSHE (115 aa). Zn(2+) contacts are provided by C23, C26, C94, and C97.

Belongs to the DSS4/MSS4 family. In terms of assembly, interacts with RAB8A. As to expression, ubiquitous.

Its function is as follows. Guanine-nucleotide-releasing protein that acts on members of the SEC4/YPT1/RAB subfamily. Stimulates GDP release from both YPT1, RAB3A and RAB10, but is less active on these proteins than on the SEC4 protein. Might play a general role in vesicular transport. This chain is Guanine nucleotide exchange factor MSS4 (RABIF), found in Homo sapiens (Human).